A 400-amino-acid polypeptide reads, in one-letter code: Tryptophan synthase beta chain (400 aa).

Position 92 is an N6-(pyridoxal phosphate)lysine (Lys92).

The protein belongs to the TrpB family. As to quaternary structure, tetramer of two alpha and two beta chains. Pyridoxal 5'-phosphate serves as cofactor.

It catalyses the reaction (1S,2R)-1-C-(indol-3-yl)glycerol 3-phosphate + L-serine = D-glyceraldehyde 3-phosphate + L-tryptophan + H2O. Its pathway is amino-acid biosynthesis; L-tryptophan biosynthesis; L-tryptophan from chorismate: step 5/5. The beta subunit is responsible for the synthesis of L-tryptophan from indole and L-serine. The protein is Tryptophan synthase beta chain of Neisseria meningitidis serogroup C (strain 053442).